A 155-amino-acid polypeptide reads, in one-letter code: Regulatory protein RecX (155 aa).

Belongs to the RecX family.

Its subcellular location is the cytoplasm. Functionally, modulates RecA activity. This Vibrio campbellii (strain ATCC BAA-1116) protein is Regulatory protein RecX.